We begin with the raw amino-acid sequence, 383 residues long: Opsin Rh4 (383 aa).

Residues 1–57 are Extracellular-facing; it reads MDIAGSLCNASEGPVLRPEARVSGNGDLQFLGWNVPPDQIQHIPEHWLTQLEPPASM. An N-linked (GlcNAc...) asparagine glycan is attached at Asn9. A helical membrane pass occupies residues 58–82; the sequence is HYMLGVFYIFLFCASTVGNGMVIWI. Residues 83–94 are Cytoplasmic-facing; it reads FSTSKALRTPSN. A helical transmembrane segment spans residues 95 to 117; it reads MFVLNLAVFDFIMCLKAPIFIYN. The Extracellular portion of the chain corresponds to 118–133; sequence SFHRGFALGNTGCQIF. An intrachain disulfide couples Cys130 to Cys207. Residues 134 to 153 form a helical membrane-spanning segment; the sequence is AAIGSYSGIGAGMTNAAIGY. Over 154 to 171 the chain is Cytoplasmic; the sequence is DRLNVITKPMNRNMTFTK. Residues 172–196 form a helical membrane-spanning segment; sequence AIIMNVIIWLYCTPWVVLPLTQFWD. Residues 197 to 220 lie on the Extracellular side of the membrane; the sequence is RFVPEGYLTSCTFDYLTDNFDTRL. The helical transmembrane segment at 221 to 248 threads the bilayer; it reads FVGTIFFFSFVCPTLMIIYYYSQIVGHV. Residues 249–284 are Cytoplasmic-facing; the sequence is FSHEKALREQAKKMNVESLRSNVDKSKDTAEIRIAK. Residues 285–308 form a helical membrane-spanning segment; sequence AAITICFLFFVSWTPYGVMSLIGA. The Extracellular segment spans residues 309 to 316; the sequence is FGDKSLLT. The helical transmembrane segment at 317–341 threads the bilayer; that stretch reads PGATMIPACTCKLVACIDPFVYAIS. Lys328 carries the post-translational modification N6-(retinylidene)lysine. Topologically, residues 342–383 are cytoplasmic; the sequence is HPRYRMELQKRCPWLAIDEKAPESSSAASTTTTQEQQQTTAA. A disordered region spans residues 361-383; the sequence is KAPESSSAASTTTTQEQQQTTAA. The segment covering 364–383 has biased composition (low complexity); the sequence is ESSSAASTTTTQEQQQTTAA.

This sequence belongs to the G-protein coupled receptor 1 family. Opsin subfamily. Post-translationally, phosphorylated on some or all of the serine and threonine residues present in the C-terminal region.

It is found in the membrane. Visual pigments are the light-absorbing molecules that mediate vision. They consist of an apoprotein, opsin, covalently linked to cis-retinal. This Drosophila virilis (Fruit fly) protein is Opsin Rh4 (Rh4).